The primary structure comprises 785 residues: Endonuclease MutS2 (785 aa).

335–342 (GPNTGGKT) is a binding site for ATP. One can recognise a Smr domain in the interval 710-785 (LDLRGERYED…GNGVTIVEFK (76 aa)).

Belongs to the DNA mismatch repair MutS family. MutS2 subfamily. Homodimer. Binds to stalled ribosomes, contacting rRNA.

Functionally, endonuclease that is involved in the suppression of homologous recombination and thus may have a key role in the control of bacterial genetic diversity. In terms of biological role, acts as a ribosome collision sensor, splitting the ribosome into its 2 subunits. Detects stalled/collided 70S ribosomes which it binds and splits by an ATP-hydrolysis driven conformational change. Acts upstream of the ribosome quality control system (RQC), a ribosome-associated complex that mediates the extraction of incompletely synthesized nascent chains from stalled ribosomes and their subsequent degradation. Probably generates substrates for RQC. In Listeria monocytogenes serotype 4b (strain CLIP80459), this protein is Endonuclease MutS2.